The following is a 781-amino-acid chain: DEAD-box ATP-dependent RNA helicase 50 (781 aa).

Disordered stretches follow at residues 72–103, 117–148, 166–240, 254–292, and 313–342; these read EFAP…LTAS, GKVT…DEGF, IPRS…KGDR, GRAI…REDR, and YNPR…RGWG. Over residues 79–88 the composition is skewed to low complexity; that stretch reads SDLLSSIPSE. The span at 130-143 shows a compositional bias: acidic residues; sequence EEEDEDDASDENYS. Basic and acidic residues predominate over residues 171–197; it reads KSAERNEVKRASKVRESRESRRDLDRL. Positions 198 to 208 are enriched in acidic residues; it reads EGDDEDVDEVS. Residues 216–226 show a composition bias toward polar residues; it reads NQRAGSRSSYS. The span at 254-274 shows a compositional bias: basic and acidic residues; that stretch reads GRAIDEVSNPRKFNDNERAES. A compositionally biased stretch (low complexity) spans 275–286; it reads RSSYSRDSSANS. The segment covering 313 to 325 has biased composition (basic and acidic residues); that stretch reads YNPRRFTDNERGL. Positions 374 to 402 match the Q motif motif; sequence KTFAEIGCSEDMMKALKEQNFDRPAHIQA. The 182-residue stretch at 405–586 folds into the Helicase ATP-binding domain; the sequence is FSPVIDGKSC…VEVFPDCEVV (182 aa). 418-425 provides a ligand contact to ATP; sequence DQSGSGKT. The DEAD box signature appears at 533–536; that stretch reads DEVD. Residues 621–781 enclose the Helicase C-terminal domain; that stretch reads NKKTALLQIM…DVPNAYEFTT (161 aa).

Belongs to the DEAD box helicase family.

It carries out the reaction ATP + H2O = ADP + phosphate + H(+). Probably involved in resistance to biotic and abiotic stresses. The chain is DEAD-box ATP-dependent RNA helicase 50 (RH50) from Arabidopsis thaliana (Mouse-ear cress).